The chain runs to 190 residues: Fe/S biogenesis protein NfuA (190 aa).

[4Fe-4S] cluster contacts are provided by Cys-148 and Cys-151.

Belongs to the NfuA family. As to quaternary structure, homodimer. [4Fe-4S] cluster serves as cofactor.

Involved in iron-sulfur cluster biogenesis. Binds a 4Fe-4S cluster, can transfer this cluster to apoproteins, and thereby intervenes in the maturation of Fe/S proteins. Could also act as a scaffold/chaperone for damaged Fe/S proteins. In Baumannia cicadellinicola subsp. Homalodisca coagulata, this protein is Fe/S biogenesis protein NfuA.